Reading from the N-terminus, the 337-residue chain is Protein FAM169B (337 aa).

Residues S278–R326 form a disordered region. The span at T291–H306 shows a compositional bias: polar residues. The span at G307–Q322 shows a compositional bias: basic and acidic residues.

This sequence belongs to the FAM169 family.

The protein is Protein FAM169B (Fam169b) of Mus musculus (Mouse).